A 282-amino-acid polypeptide reads, in one-letter code: 3-methyl-2-oxobutanoate hydroxymethyltransferase (282 aa).

2 residues coordinate Mg(2+): Asp-46 and Asp-85. 3-methyl-2-oxobutanoate-binding positions include 46–47 (DS), Asp-85, and Lys-115. A Mg(2+)-binding site is contributed by Glu-117. The active-site Proton acceptor is the Glu-184.

This sequence belongs to the PanB family. In terms of assembly, homodecamer; pentamer of dimers. Mg(2+) serves as cofactor.

It is found in the cytoplasm. It carries out the reaction 3-methyl-2-oxobutanoate + (6R)-5,10-methylene-5,6,7,8-tetrahydrofolate + H2O = 2-dehydropantoate + (6S)-5,6,7,8-tetrahydrofolate. The protein operates within cofactor biosynthesis; (R)-pantothenate biosynthesis; (R)-pantoate from 3-methyl-2-oxobutanoate: step 1/2. In terms of biological role, catalyzes the reversible reaction in which hydroxymethyl group from 5,10-methylenetetrahydrofolate is transferred onto alpha-ketoisovalerate to form ketopantoate. This Alkaliphilus metalliredigens (strain QYMF) protein is 3-methyl-2-oxobutanoate hydroxymethyltransferase.